The following is a 291-amino-acid chain: 4-diphosphocytidyl-2-C-methyl-D-erythritol kinase (291 aa).

Residue Lys-10 is part of the active site. 100–110 (PIGGGLGGGSS) contributes to the ATP binding site. Asp-142 is a catalytic residue.

The protein belongs to the GHMP kinase family. IspE subfamily. As to quaternary structure, homodimer.

The catalysed reaction is 4-CDP-2-C-methyl-D-erythritol + ATP = 4-CDP-2-C-methyl-D-erythritol 2-phosphate + ADP + H(+). It functions in the pathway isoprenoid biosynthesis; isopentenyl diphosphate biosynthesis via DXP pathway; isopentenyl diphosphate from 1-deoxy-D-xylulose 5-phosphate: step 3/6. Catalyzes the phosphorylation of the position 2 hydroxy group of 4-diphosphocytidyl-2C-methyl-D-erythritol. The chain is 4-diphosphocytidyl-2-C-methyl-D-erythritol kinase from Hamiltonella defensa subsp. Acyrthosiphon pisum (strain 5AT).